A 343-amino-acid polypeptide reads, in one-letter code: MGLLERLRKEWFIIGIILVIVAAKLEPTIGEKGGPLKPEITITYIAVSAIFFNSGLSLKTEELTNALMHVKLHLFVQLFTLVFFPTAIWIFLQVLSLTPINEWLLKGLQTVSCMPPPVSSAVILTKAVGGNEAAAIFNSAFGSFLGIVVTPLLLLLFLGSSSSVPFTSIFSQLFMTVVVPLIIGQIVRRYIKDWLERKKPPFGAISSCVLLMIIYTTFCDTFSNPNIDLDTFSLVVIVFIIFFIQLAFMLLTFLFSTSKNSGFTPADTVAIVFCSTHKSLTLGIPMLKIVFAGYEHLSLISVPLLIYHPAQILLGSVLVPTIKSWMLSRRKALKLTRQPKIPL.

The Cytoplasmic portion of the chain corresponds to 1 to 9 (MGLLERLRK). Residues 10 to 30 (EWFIIGIILVIVAAKLEPTIG) form a helical membrane-spanning segment. The Extracellular portion of the chain corresponds to 31–37 (EKGGPLK). The chain crosses the membrane as a helical span at residues 38–58 (PEITITYIAVSAIFFNSGLSL). At 59 to 71 (KTEELTNALMHVK) the chain is on the cytoplasmic side. Residues 72–92 (LHLFVQLFTLVFFPTAIWIFL) traverse the membrane as a helical segment. Topologically, residues 93-116 (QVLSLTPINEWLLKGLQTVSCMPP) are extracellular. The helical transmembrane segment at 117–137 (PVSSAVILTKAVGGNEAAAIF) threads the bilayer. Residue N138 is a topological domain, cytoplasmic. The chain crosses the membrane as a helical span at residues 139 to 159 (SAFGSFLGIVVTPLLLLLFLG). Residues 160–163 (SSSS) are Extracellular-facing. The helical transmembrane segment at 164–184 (VPFTSIFSQLFMTVVVPLIIG) threads the bilayer. Residues 185–201 (QIVRRYIKDWLERKKPP) are Cytoplasmic-facing. Residues 202-222 (FGAISSCVLLMIIYTTFCDTF) form a helical membrane-spanning segment. The Extracellular segment spans residues 223–234 (SNPNIDLDTFSL). A helical transmembrane segment spans residues 235 to 255 (VVIVFIIFFIQLAFMLLTFLF). Residues 256-270 (STSKNSGFTPADTVA) are Cytoplasmic-facing. The helical transmembrane segment at 271–291 (IVFCSTHKSLTLGIPMLKIVF) threads the bilayer. The Extracellular segment spans residues 292–298 (AGYEHLS). The helical transmembrane segment at 299-319 (LISVPLLIYHPAQILLGSVLV) threads the bilayer. Topologically, residues 320-343 (PTIKSWMLSRRKALKLTRQPKIPL) are cytoplasmic.

It belongs to the bile acid:sodium symporter (BASS) (TC 2.A.28) family.

Its subcellular location is the cell membrane. It is found in the endoplasmic reticulum membrane. The protein localises to the golgi apparatus membrane. Involved in teeth and skeletal development. Has an essential role in the biosynthesis and trafficking of glycosaminoglycans and glycoproteins to produce a proper functioning extracellular matrix. Required for extracellular matrix mineralization. Also involved in the regulation of cellular calcium homeostasis. Does not show transport activity towards bile acids or steroid sulfates. The sequence is that of Sodium/bile acid cotransporter 7-B (slc10a7-b) from Xenopus laevis (African clawed frog).